A 365-amino-acid chain; its full sequence is Peptide chain release factor 2 (365 aa).

Q252 is modified (N5-methylglutamine).

This sequence belongs to the prokaryotic/mitochondrial release factor family. In terms of processing, methylated by PrmC. Methylation increases the termination efficiency of RF2.

The protein resides in the cytoplasm. In terms of biological role, peptide chain release factor 2 directs the termination of translation in response to the peptide chain termination codons UGA and UAA. The chain is Peptide chain release factor 2 from Klebsiella pneumoniae (strain 342).